The following is a 539-amino-acid chain: Membrane protein insertase YidC (539 aa).

Residues 6–26 (NILLIALALVSFLLFQQWNVA) form a helical membrane-spanning segment. The span at 35 to 44 (EQAQSGSTLP) shows a compositional bias: polar residues. The segment at 35-55 (EQAQSGSTLPAPSYADDLDPA) is disordered. The next 4 helical transmembrane spans lie at 341–361 (SFIQGIVVNWGLAIICLTFIV), 416–436 (LGGCLPILLQMPIFISLYWAL), 454–474 (LSAQDPYYILPLLMGASMFLI), and 495–515 (PVMFTFFFLFFPSGLVLYWLV).

Belongs to the OXA1/ALB3/YidC family. Type 1 subfamily. Interacts with the Sec translocase complex via SecD. Specifically interacts with transmembrane segments of nascent integral membrane proteins during membrane integration.

The protein resides in the cell inner membrane. Required for the insertion and/or proper folding and/or complex formation of integral membrane proteins into the membrane. Involved in integration of membrane proteins that insert both dependently and independently of the Sec translocase complex, as well as at least some lipoproteins. Aids folding of multispanning membrane proteins. In Vibrio atlanticus (strain LGP32) (Vibrio splendidus (strain Mel32)), this protein is Membrane protein insertase YidC.